The primary structure comprises 180 residues: Major urinary protein 2 (180 aa).

Residues 1-18 form the signal peptide; sequence MKMLLLLCLGLTLVCVHA. The cysteines at positions 82 and 175 are disulfide-linked.

Belongs to the calycin superfamily. Lipocalin family. Abundant in the urine of adult male mice but absent from that of females.

It is found in the secreted. In terms of biological role, binds pheromones that are released from drying urine of males. These pheromones affect the sexual behavior of females. The sequence is that of Major urinary protein 2 (Mup2) from Mus musculus (Mouse).